The chain runs to 209 residues: LexA repressor (209 aa).

A DNA-binding region (H-T-H motif) is located at residues 28 to 48 (RVELAKILGFRSANAAEEHLK). Residues Ser126 and Lys163 each act as for autocatalytic cleavage activity in the active site.

The protein belongs to the peptidase S24 family. In terms of assembly, homodimer.

The catalysed reaction is Hydrolysis of Ala-|-Gly bond in repressor LexA.. Represses a number of genes involved in the response to DNA damage (SOS response), including recA and lexA. In the presence of single-stranded DNA, RecA interacts with LexA causing an autocatalytic cleavage which disrupts the DNA-binding part of LexA, leading to derepression of the SOS regulon and eventually DNA repair. The polypeptide is LexA repressor (Psychromonas ingrahamii (strain DSM 17664 / CCUG 51855 / 37)).